We begin with the raw amino-acid sequence, 191 residues long: Putative endogenous retrovirus group K member 11-1 Env polyprotein (191 aa).

The truncated surface protein stretch occupies residues 1–191 (MPGAIDDHCP…DITLHPQGLV (191 aa)).

It belongs to the beta type-B retroviral envelope protein family. HERV class-II K(HML-8) env subfamily. As to expression, cerebellum and testis.

Its subcellular location is the virion. Retroviral envelope proteins mediate receptor recognition and membrane fusion during early infection. Endogenous envelope proteins may have kept, lost or modified their original function during evolution. This Homo sapiens (Human) protein is Putative endogenous retrovirus group K member 11-1 Env polyprotein (ERVK11-1).